Reading from the N-terminus, the 162-residue chain is Calcium vector protein (162 aa).

Residue Ala-2 is modified to N-acetylalanine. EF-hand domains lie at 12 to 47 (EEKDECMKIFDIFDRNAENIAPVSDTMDMLTKLGQT), 49 to 84 (TKRETEAIMKEARGPKGDKKNIGPEEWLTLCSKWVR), 86 to 121 (DDEEEILRAFKVFDANGDGVIDFDEFKFIMQKVGEE), and 123 to 158 (LTDAEVEEAMKEADEDGNGVIDIPEFMDLIKKSKNA). Residue Lys-96 is modified to N6,N6,N6-trimethyllysine. Residues Asp-99, Asn-101, Asp-103, and Glu-110 each contribute to the Ca(2+) site. Residue Lys-117 is modified to N6,N6,N6-trimethyllysine. Ca(2+) is bound by residues Asp-136, Asp-138, Asn-140, and Glu-147.

It localises to the cytoplasm. Functionally, the exact function of this protein is not yet known. It interacts with CAVPT, a protein also of unknown function, in a calcium-dependent way. This protein binds two calcium ions. This chain is Calcium vector protein, found in Branchiostoma lanceolatum (Common lancelet).